The sequence spans 407 residues: MAYDLLLERFLRYAKINTRSDENATRTPTTQSQVDFALNILKPELEELGLSNIHYLESNGYLVATLPANDDRLTRKIGFISHMDTADFNAEGVSPQVIESYDGGIIPLGTSGYNLDPADFPNLQNYIGQTLITTDGTTLLGADDKSGIAEIMTALAHLKANPEIKHCEIRVGFGPDEEIGIGADKFDVDDFDVDFAYTVDGGPLGELQYETFSAAAAELIFHGRNVHPGTAKGQMVNALQLAIDFHNQLPAEDRPELTDGYQGFNHLQTMTGTVEEANSSYIIRDFETESFENRKATFQEIADKMNQAYGQTRVDLVIKDQYYNMRQVIEKDMMPVELAKEVMEDLGIVPVIEPIRGGTDGSKISFMGIPTPNIFAGGENMHGRYEFVSLQTMEKAVDVILGIVSKP.

H82 provides a ligand contact to Zn(2+). D84 is a catalytic residue. Residue D143 participates in Zn(2+) binding. E177 (proton acceptor) is an active-site residue. Zn(2+)-binding residues include E178, D200, and H382.

Belongs to the peptidase M20B family. Zn(2+) is required as a cofactor.

It localises to the cytoplasm. It catalyses the reaction Release of the N-terminal residue from a tripeptide.. Cleaves the N-terminal amino acid of tripeptides. In Streptococcus thermophilus (strain CNRZ 1066), this protein is Peptidase T.